The primary structure comprises 307 residues: Malate dehydrogenase (307 aa).

Residues Gly8 to Gly13 and Asp32 each bind NAD(+). The substrate site is built by Arg81 and Arg87. NAD(+) contacts are provided by residues Asn94 and Val117–Asn119. 2 residues coordinate substrate: Asn119 and Arg150. Catalysis depends on His174, which acts as the Proton acceptor.

It belongs to the LDH/MDH superfamily. MDH type 3 family.

It carries out the reaction (S)-malate + NAD(+) = oxaloacetate + NADH + H(+). In terms of biological role, catalyzes the reversible oxidation of malate to oxaloacetate. The sequence is that of Malate dehydrogenase from Dehalococcoides mccartyi (strain ATCC BAA-2266 / KCTC 15142 / 195) (Dehalococcoides ethenogenes (strain 195)).